An 80-amino-acid polypeptide reads, in one-letter code: Acyl carrier protein (80 aa).

The Carrier domain maps to glutamate 4 to glutamine 79. Serine 39 is modified (O-(pantetheine 4'-phosphoryl)serine).

It belongs to the acyl carrier protein (ACP) family. In terms of processing, 4'-phosphopantetheine is transferred from CoA to a specific serine of apo-ACP by AcpS. This modification is essential for activity because fatty acids are bound in thioester linkage to the sulfhydryl of the prosthetic group.

The protein resides in the cytoplasm. It functions in the pathway lipid metabolism; fatty acid biosynthesis. Functionally, carrier of the growing fatty acid chain in fatty acid biosynthesis. The polypeptide is Acyl carrier protein (Lactobacillus acidophilus (strain ATCC 700396 / NCK56 / N2 / NCFM)).